The primary structure comprises 447 residues: MTRKLFGTDGVRGTANTHPMTAEMALRLGAAAGRYFRPVGAGSPRVVIGKDTRLSGYMLENALTAGLTSTGMNVLLLGPVPTPAVGFLTRSMRAALGVMISASHNPHEDNGIKFFGPDGFKLSDEAEAEIEAILAGEIQPAQPGNIGRAKRIEDGRGRYQEYCKTTFPSGLRLDGLKVVIDCANGAAYRAAPEVLWELGAEVIPVGVEPNGKNINLRCGSTHPQAAGEAVRAHGADVGICLDGDADRVIILDETGKEADGDQIMALFAARWADEGRLRDGTLVATVMSNLGLERFLGARGLRLERTPVGDRYVVEAMRRGGWNLGGEQSGHIVMTDFATTGDGLLAGLQFLAAMAQTGRRASDLARSFETVPQLLQNVRYAAGQEPLKAPGVQAVIRDAEVRLNGAGRLLIRKSGTEPLIRVMAECEDEALLRDVVEEIVAAVRDAA.

Serine 103 functions as the Phosphoserine intermediate in the catalytic mechanism. Residues serine 103, aspartate 242, aspartate 244, and aspartate 246 each contribute to the Mg(2+) site. Serine 103 is subject to Phosphoserine.

This sequence belongs to the phosphohexose mutase family. Requires Mg(2+) as cofactor. In terms of processing, activated by phosphorylation.

The catalysed reaction is alpha-D-glucosamine 1-phosphate = D-glucosamine 6-phosphate. Its function is as follows. Catalyzes the conversion of glucosamine-6-phosphate to glucosamine-1-phosphate. This Cereibacter sphaeroides (strain ATCC 17023 / DSM 158 / JCM 6121 / CCUG 31486 / LMG 2827 / NBRC 12203 / NCIMB 8253 / ATH 2.4.1.) (Rhodobacter sphaeroides) protein is Phosphoglucosamine mutase.